We begin with the raw amino-acid sequence, 63 residues long: Large ribosomal subunit protein bL33 (63 aa).

It belongs to the bacterial ribosomal protein bL33 family.

This is Large ribosomal subunit protein bL33 from Gloeobacter violaceus (strain ATCC 29082 / PCC 7421).